The primary structure comprises 178 residues: Fatty-acid and retinol-binding protein 1 (178 aa).

An N-terminal signal peptide occupies residues 1–16 (MYHQLILMALIGVIMA). Coiled-coil stretches lie at residues 67-89 (DAAL…ELRN) and 122-154 (QKLD…LKAT).

This sequence belongs to the fatty-acid and retinol-binding protein (FARBP) family. Post-translationally, not glycosylated.

The protein localises to the secreted. Its function is as follows. Binds retinol and different fatty acids. This chain is Fatty-acid and retinol-binding protein 1, found in Litomosoides sigmodontis (Filarial nematode worm).